The primary structure comprises 245 residues: 1-(5-phosphoribosyl)-5-[(5-phosphoribosylamino)methylideneamino] imidazole-4-carboxamide isomerase (245 aa).

Aspartate 7 serves as the catalytic Proton acceptor. The active-site Proton donor is aspartate 129.

It belongs to the HisA/HisF family.

Its subcellular location is the cytoplasm. The catalysed reaction is 1-(5-phospho-beta-D-ribosyl)-5-[(5-phospho-beta-D-ribosylamino)methylideneamino]imidazole-4-carboxamide = 5-[(5-phospho-1-deoxy-D-ribulos-1-ylimino)methylamino]-1-(5-phospho-beta-D-ribosyl)imidazole-4-carboxamide. The protein operates within amino-acid biosynthesis; L-histidine biosynthesis; L-histidine from 5-phospho-alpha-D-ribose 1-diphosphate: step 4/9. The polypeptide is 1-(5-phosphoribosyl)-5-[(5-phosphoribosylamino)methylideneamino] imidazole-4-carboxamide isomerase (Alteromonas mediterranea (strain DSM 17117 / CIP 110805 / LMG 28347 / Deep ecotype)).